The following is a 413-amino-acid chain: Cardiolipin synthase B (413 aa).

PLD phosphodiesterase domains lie at 108 to 135 and 285 to 312; these read VFRRMHRKIVVIDARIAFIGGLNYSAEH and RRRPLHGKVALMDDHWATVGSSNLDPLS. Catalysis depends on residues His113, Lys115, Asp120, His290, Lys292, and Asp297. Residues 390–413 are disordered; that stretch reads VDPPAQPTMETQDRVETENTGVKP.

It belongs to the phospholipase D family. Cardiolipin synthase subfamily. ClsB sub-subfamily.

It localises to the cell membrane. The catalysed reaction is 2 a 1,2-diacyl-sn-glycero-3-phospho-(1'-sn-glycerol) = a cardiolipin + glycerol. In terms of biological role, catalyzes the phosphatidyl group transfer from one phosphatidylglycerol molecule to another to form cardiolipin (CL) (diphosphatidylglycerol) and glycerol. The sequence is that of Cardiolipin synthase B from Escherichia coli O157:H7.